The following is a 225-amino-acid chain: ATP-dependent dethiobiotin synthetase BioD (225 aa).

Gly-12–Val-17 contributes to the ATP binding site. Residue Thr-16 participates in Mg(2+) binding. Residue Lys-37 is part of the active site. Thr-41 lines the substrate pocket. Residues Asp-46, Glu-105–Gly-108, Gly-166–Ser-167, and Pro-196–Gly-198 each bind ATP. Residues Asp-46 and Glu-105 each contribute to the Mg(2+) site.

Belongs to the dethiobiotin synthetase family. As to quaternary structure, homodimer. Mg(2+) is required as a cofactor.

Its subcellular location is the cytoplasm. It catalyses the reaction (7R,8S)-7,8-diammoniononanoate + CO2 + ATP = (4R,5S)-dethiobiotin + ADP + phosphate + 3 H(+). Its pathway is cofactor biosynthesis; biotin biosynthesis; biotin from 7,8-diaminononanoate: step 1/2. In terms of biological role, catalyzes a mechanistically unusual reaction, the ATP-dependent insertion of CO2 between the N7 and N8 nitrogen atoms of 7,8-diaminopelargonic acid (DAPA, also called 7,8-diammoniononanoate) to form a ureido ring. The protein is ATP-dependent dethiobiotin synthetase BioD of Mycobacteroides abscessus (strain ATCC 19977 / DSM 44196 / CCUG 20993 / CIP 104536 / JCM 13569 / NCTC 13031 / TMC 1543 / L948) (Mycobacterium abscessus).